Consider the following 206-residue polypeptide: Transmembrane emp24 domain-containing protein bai (206 aa).

Positions 1–20 (MLKSLLCILLIFGCLCRIHG) are cleaved as a signal peptide. At 21-172 (VMFHLTPNTQ…RDTNEKTNSR (152 aa)) the chain is on the lumenal side. The GOLD domain maps to 30–140 (QKCLKEDIQA…LKPLEVDLKR (111 aa)). The helical transmembrane segment at 173–193 (VLFFSIFSMCCLLGLATWQVL) threads the bilayer. At 194-206 (YLRRYFKAKKLIE) the chain is on the cytoplasmic side.

Belongs to the EMP24/GP25L family.

The protein localises to the membrane. Eca and bai are essential, though not redundant, for dorsoventral patterning of the embryo. Specifically required during early embryogenesis for the activity of maternal tkv, while the zygotic tkv is not affected. The polypeptide is Transmembrane emp24 domain-containing protein bai (Drosophila grimshawi (Hawaiian fruit fly)).